The sequence spans 427 residues: uncharacterized protein (427 aa).

It belongs to the CAF1 family.

This is an uncharacterized protein from Schizosaccharomyces pombe (strain 972 / ATCC 24843) (Fission yeast).